Here is a 145-residue protein sequence, read N- to C-terminus: Large ribosomal subunit protein uL15 (145 aa).

A disordered region spans residues 1 to 50 (MRLNTLSPAAGSKPEKQRRGRGIGSGLGKTGGRGVKGQTSRSGGGKVRAG). Residues 22–35 (GIGSGLGKTGGRGV) show a composition bias toward gly residues.

This sequence belongs to the universal ribosomal protein uL15 family. In terms of assembly, part of the 50S ribosomal subunit.

Its function is as follows. Binds to the 23S rRNA. The polypeptide is Large ribosomal subunit protein uL15 (Aeromonas salmonicida (strain A449)).